The following is a 203-amino-acid chain: Probable flagellin 1 (203 aa).

Positions 1 to 6 (MRRRRG) are excised as a propeptide.

The protein belongs to the archaeal flagellin family.

Its subcellular location is the archaeal flagellum. Its function is as follows. Flagellin is the subunit protein which polymerizes to form the filaments of archaeal flagella. This is Probable flagellin 1 (flaB1) from Aeropyrum pernix (strain ATCC 700893 / DSM 11879 / JCM 9820 / NBRC 100138 / K1).